The primary structure comprises 142 residues: Small ribosomal subunit protein uS12 (142 aa).

A disordered region spans residues M1–P22. Basic residues predominate over residues R9–S19. The residue at position 102 (D102) is a 3-methylthioaspartic acid.

This sequence belongs to the universal ribosomal protein uS12 family. In terms of assembly, part of the 30S ribosomal subunit. Contacts proteins S8 and S17. May interact with IF1 in the 30S initiation complex.

In terms of biological role, with S4 and S5 plays an important role in translational accuracy. Its function is as follows. Interacts with and stabilizes bases of the 16S rRNA that are involved in tRNA selection in the A site and with the mRNA backbone. Located at the interface of the 30S and 50S subunits, it traverses the body of the 30S subunit contacting proteins on the other side and probably holding the rRNA structure together. The combined cluster of proteins S8, S12 and S17 appears to hold together the shoulder and platform of the 30S subunit. In Acetivibrio thermocellus (strain ATCC 27405 / DSM 1237 / JCM 9322 / NBRC 103400 / NCIMB 10682 / NRRL B-4536 / VPI 7372) (Clostridium thermocellum), this protein is Small ribosomal subunit protein uS12.